The chain runs to 99 residues: Turripeptide OL71 (99 aa).

Post-translationally, contains 5 disulfide bonds. As to expression, expressed by the venom duct.

The protein resides in the secreted. Its function is as follows. Acts as a neurotoxin by inhibiting an ion channel. This Iotyrris olangoensis (Sea snail) protein is Turripeptide OL71.